The sequence spans 272 residues: CDAN1-interacting nuclease 1 (272 aa).

It localises to the nucleus. The protein localises to the cytoplasm. Its function is as follows. May play a role in erythroid cell differentiation. In Gallus gallus (Chicken), this protein is CDAN1-interacting nuclease 1 (CDIN1).